A 255-amino-acid polypeptide reads, in one-letter code: 3-deoxy-manno-octulosonate cytidylyltransferase (255 aa).

This sequence belongs to the KdsB family.

Its subcellular location is the cytoplasm. It catalyses the reaction 3-deoxy-alpha-D-manno-oct-2-ulosonate + CTP = CMP-3-deoxy-beta-D-manno-octulosonate + diphosphate. The protein operates within nucleotide-sugar biosynthesis; CMP-3-deoxy-D-manno-octulosonate biosynthesis; CMP-3-deoxy-D-manno-octulosonate from 3-deoxy-D-manno-octulosonate and CTP: step 1/1. It functions in the pathway bacterial outer membrane biogenesis; lipopolysaccharide biosynthesis. Functionally, activates KDO (a required 8-carbon sugar) for incorporation into bacterial lipopolysaccharide in Gram-negative bacteria. The protein is 3-deoxy-manno-octulosonate cytidylyltransferase of Pelobacter propionicus (strain DSM 2379 / NBRC 103807 / OttBd1).